We begin with the raw amino-acid sequence, 243 residues long: Small ribosomal subunit protein uS3 (243 aa).

The KH type-2 domain occupies 39–107; sequence IRAYLIKELK…ETHLNIVEVR (69 aa). Residues 214–243 are disordered; that stretch reads ASERRGLEGDAQGPASRERGDRPDRRRENA. Residues 229-243 show a composition bias toward basic and acidic residues; the sequence is SRERGDRPDRRRENA.

It belongs to the universal ribosomal protein uS3 family. As to quaternary structure, part of the 30S ribosomal subunit. Forms a tight complex with proteins S10 and S14.

Its function is as follows. Binds the lower part of the 30S subunit head. Binds mRNA in the 70S ribosome, positioning it for translation. The sequence is that of Small ribosomal subunit protein uS3 from Agrobacterium fabrum (strain C58 / ATCC 33970) (Agrobacterium tumefaciens (strain C58)).